A 160-amino-acid polypeptide reads, in one-letter code: Nucleotide-binding protein VFMJ11_1323 (160 aa).

It belongs to the YajQ family.

Its function is as follows. Nucleotide-binding protein. The sequence is that of Nucleotide-binding protein VFMJ11_1323 from Aliivibrio fischeri (strain MJ11) (Vibrio fischeri).